The primary structure comprises 193 residues: dCTP deaminase (193 aa).

DCTP contacts are provided by residues 110-115 (RSSLAR), D128, 136-138 (VLE), Y171, K178, and Q182. E138 (proton donor/acceptor) is an active-site residue. The disordered stretch occupies residues 171–193 (YHQRQDAKYHNQKGAVASRIDKD).

The protein belongs to the dCTP deaminase family. Homotrimer.

It catalyses the reaction dCTP + H2O + H(+) = dUTP + NH4(+). It participates in pyrimidine metabolism; dUMP biosynthesis; dUMP from dCTP (dUTP route): step 1/2. Catalyzes the deamination of dCTP to dUTP. This Hamiltonella defensa subsp. Acyrthosiphon pisum (strain 5AT) protein is dCTP deaminase.